The following is a 209-amino-acid chain: Large ribosomal subunit protein uL3 (209 aa).

The tract at residues 128-163 (FGGGSRTHGQSDRLRAPGSVGGSSDPSRTFRGTRMA) is disordered.

Belongs to the universal ribosomal protein uL3 family. As to quaternary structure, part of the 50S ribosomal subunit. Forms a cluster with proteins L14 and L19.

In terms of biological role, one of the primary rRNA binding proteins, it binds directly near the 3'-end of the 23S rRNA, where it nucleates assembly of the 50S subunit. This Chlorobium phaeobacteroides (strain DSM 266 / SMG 266 / 2430) protein is Large ribosomal subunit protein uL3.